A 598-amino-acid polypeptide reads, in one-letter code: Beta-galactosidase (598 aa).

A signal peptide spans 1–21; it reads MLRTTLAPLVLALALALPAAA. The active-site Proton donor is Glu-184. The active-site Nucleophile is Glu-260.

The protein belongs to the glycosyl hydrolase 35 family.

It catalyses the reaction Hydrolysis of terminal non-reducing beta-D-galactose residues in beta-D-galactosides.. Preferentially hydrolyzes beta(1-&gt;3) galactosyl linkages over beta(1-&gt;4) linkages. The chain is Beta-galactosidase (bga) from Xanthomonas manihotis.